The chain runs to 135 residues: Putative nickel-responsive regulator (135 aa).

Ni(2+)-binding residues include His-79, His-90, His-92, and Cys-98.

It belongs to the transcriptional regulatory CopG/NikR family. Ni(2+) is required as a cofactor.

In terms of biological role, transcriptional regulator. The protein is Putative nickel-responsive regulator of Dictyoglomus thermophilum (strain ATCC 35947 / DSM 3960 / H-6-12).